We begin with the raw amino-acid sequence, 204 residues long: Holliday junction branch migration complex subunit RuvA (204 aa).

The tract at residues 1–67 (MIGYLEGKIL…QPKPVLIGFN (67 aa)) is domain I. The domain II stretch occupies residues 68 to 145 (SLEEREFFER…VFAGEHGGEP (78 aa)). The segment at 146 to 156 (AGPAPVEENFH) is flexible linker. Positions 156–204 (HLLVLDVLVNQLGHKAAEAKELINQAIKRNPAISSPEELFDEVYRGETG) are domain III.

This sequence belongs to the RuvA family. As to quaternary structure, homotetramer. Forms an RuvA(8)-RuvB(12)-Holliday junction (HJ) complex. HJ DNA is sandwiched between 2 RuvA tetramers; dsDNA enters through RuvA and exits via RuvB. An RuvB hexamer assembles on each DNA strand where it exits the tetramer. Each RuvB hexamer is contacted by two RuvA subunits (via domain III) on 2 adjacent RuvB subunits; this complex drives branch migration. In the full resolvosome a probable DNA-RuvA(4)-RuvB(12)-RuvC(2) complex forms which resolves the HJ.

It is found in the cytoplasm. In terms of biological role, the RuvA-RuvB-RuvC complex processes Holliday junction (HJ) DNA during genetic recombination and DNA repair, while the RuvA-RuvB complex plays an important role in the rescue of blocked DNA replication forks via replication fork reversal (RFR). RuvA specifically binds to HJ cruciform DNA, conferring on it an open structure. The RuvB hexamer acts as an ATP-dependent pump, pulling dsDNA into and through the RuvAB complex. HJ branch migration allows RuvC to scan DNA until it finds its consensus sequence, where it cleaves and resolves the cruciform DNA. The protein is Holliday junction branch migration complex subunit RuvA of Desulfatibacillum aliphaticivorans.